The primary structure comprises 286 residues: Mitochondrial dicarboxylate carrier (286 aa).

3 Solcar repeats span residues 7–87, 100–187, and 196–279; these read SRWY…MRDY, SKVL…AKQL, and DNIF…LRKH. 3 helical membrane-spanning segments follow: residues 9–29, 62–81, and 102–122; these read WYFG…LDLL, GLSA…FAIY, and VLLG…ADLV. The residue at position 158 (K158) is an N6-acetyllysine. 3 consecutive transmembrane segments (helical) span residues 162 to 181, 202 to 222, and 254 to 274; these read GATM…LSCY, FLSS…LDVL, and GLVP…MFLE.

It belongs to the mitochondrial carrier (TC 2.A.29) family. As to expression, expressed most strongly in liver, then kidney, and at lower levels in heart and brain.

Its subcellular location is the mitochondrion inner membrane. The catalysed reaction is (S)-malate(in) + phosphate(out) = (S)-malate(out) + phosphate(in). The enzyme catalyses malonate(out) + (S)-malate(in) = malonate(in) + (S)-malate(out). It catalyses the reaction (S)-malate(in) + succinate(out) = (S)-malate(out) + succinate(in). It carries out the reaction (S)-malate(in) + sulfate(out) = (S)-malate(out) + sulfate(in). The catalysed reaction is malonate(out) + phosphate(in) = malonate(in) + phosphate(out). The enzyme catalyses succinate(out) + phosphate(in) = succinate(in) + phosphate(out). It catalyses the reaction sulfate(out) + phosphate(in) = sulfate(in) + phosphate(out). It carries out the reaction malonate(out) + succinate(in) = malonate(in) + succinate(out). Its function is as follows. Catalyzes the electroneutral exchange or flux of physiologically important metabolites such as dicarboxylates (malonate, malate, succinate), inorganic sulfur-containing anions, and phosphate, across mitochondrial inner membrane. Plays an important role in gluconeogenesis, fatty acid metabolism, urea synthesis, and sulfur metabolism, particularly in liver, by supplying the substrates for the different metabolic processes. Regulates fatty acid release from adipocytes, and contributes to systemic insulin sensitivity. This Rattus norvegicus (Rat) protein is Mitochondrial dicarboxylate carrier.